We begin with the raw amino-acid sequence, 294 residues long: Pyridoxal 5'-phosphate synthase subunit PdxS (294 aa).

A D-ribose 5-phosphate-binding site is contributed by aspartate 24. Lysine 81 acts as the Schiff-base intermediate with D-ribose 5-phosphate in catalysis. Position 153 (glycine 153) interacts with D-ribose 5-phosphate. Residue arginine 165 coordinates D-glyceraldehyde 3-phosphate. Residues glycine 214 and 235-236 (GS) contribute to the D-ribose 5-phosphate site.

Belongs to the PdxS/SNZ family. As to quaternary structure, in the presence of PdxT, forms a dodecamer of heterodimers.

It carries out the reaction aldehydo-D-ribose 5-phosphate + D-glyceraldehyde 3-phosphate + L-glutamine = pyridoxal 5'-phosphate + L-glutamate + phosphate + 3 H2O + H(+). It participates in cofactor biosynthesis; pyridoxal 5'-phosphate biosynthesis. In terms of biological role, catalyzes the formation of pyridoxal 5'-phosphate from ribose 5-phosphate (RBP), glyceraldehyde 3-phosphate (G3P) and ammonia. The ammonia is provided by the PdxT subunit. Can also use ribulose 5-phosphate and dihydroxyacetone phosphate as substrates, resulting from enzyme-catalyzed isomerization of RBP and G3P, respectively. In Bacillus pumilus (strain SAFR-032), this protein is Pyridoxal 5'-phosphate synthase subunit PdxS.